Consider the following 212-residue polypeptide: Ribonuclease P protein component 3 (212 aa).

It belongs to the eukaryotic/archaeal RNase P protein component 3 family. In terms of assembly, consists of a catalytic RNA component and at least 4-5 protein subunits.

It localises to the cytoplasm. It carries out the reaction Endonucleolytic cleavage of RNA, removing 5'-extranucleotides from tRNA precursor.. Part of ribonuclease P, a protein complex that generates mature tRNA molecules by cleaving their 5'-ends. In Pyrococcus abyssi (strain GE5 / Orsay), this protein is Ribonuclease P protein component 3.